A 45-amino-acid chain; its full sequence is DNA-directed RNA polymerase subunit Rpo12 (45 aa).

Zn(2+) contacts are provided by C8, C23, and C26.

Belongs to the archaeal Rpo12/eukaryotic RPC10 RNA polymerase subunit family. Part of the RNA polymerase complex. Zn(2+) is required as a cofactor.

It localises to the cytoplasm. It carries out the reaction RNA(n) + a ribonucleoside 5'-triphosphate = RNA(n+1) + diphosphate. Its function is as follows. DNA-dependent RNA polymerase (RNAP) catalyzes the transcription of DNA into RNA using the four ribonucleoside triphosphates as substrates. This is DNA-directed RNA polymerase subunit Rpo12 from Methanosarcina acetivorans (strain ATCC 35395 / DSM 2834 / JCM 12185 / C2A).